We begin with the raw amino-acid sequence, 77 residues long: Putative Fis-like DNA-binding protein (77 aa).

Residues Gln-53–Gln-72 constitute a DNA-binding region (H-T-H motif).

Belongs to the transcriptional regulatory Fis family.

The sequence is that of Putative Fis-like DNA-binding protein from Ralstonia nicotianae (strain ATCC BAA-1114 / GMI1000) (Ralstonia solanacearum).